The sequence spans 134 residues: UPF0719 transmembrane protein YshE (134 aa).

Helical transmembrane passes span 10–30, 48–68, 78–98, and 114–134; these read VEIA…LTVF, AVAM…QHSI, IGWG…FEFL, and AVGF…AAGI.

Belongs to the UPF0719 family.

It is found in the cell membrane. This chain is UPF0719 transmembrane protein YshE (yshE), found in Bacillus subtilis (strain 168).